We begin with the raw amino-acid sequence, 233 residues long: Superoxide dismutase [Mn], mitochondrial (233 aa).

The transit peptide at 1-26 directs the protein to the mitochondrion; it reads MFAKTAAANLTKKGGLSLLSTTARRT. Histidine 52 and histidine 107 together coordinate Mn(2+). Residues threonine 147 and threonine 149 each carry the phosphothreonine modification. Residues aspartate 194 and histidine 198 each coordinate Mn(2+).

Belongs to the iron/manganese superoxide dismutase family. In terms of assembly, homotetramer. The cofactor is Mn(2+).

The protein resides in the mitochondrion matrix. The enzyme catalyses 2 superoxide + 2 H(+) = H2O2 + O2. In terms of biological role, destroys superoxide anion radicals which are normally produced within the cells and which are toxic to biological systems. This Saccharomyces cerevisiae (strain ATCC 204508 / S288c) (Baker's yeast) protein is Superoxide dismutase [Mn], mitochondrial (SOD2).